A 72-amino-acid chain; its full sequence is uncharacterized protein (72 aa).

A signal peptide spans Met-1–Ala-22. The Extracellular portion of the chain corresponds to Ser-23–Met-28. The helical transmembrane segment at Thr-29–Phe-49 threads the bilayer. The Cytoplasmic portion of the chain corresponds to Ser-50–Cys-72.

Its subcellular location is the membrane. This is an uncharacterized protein from Dictyostelium discoideum (Social amoeba).